The sequence spans 221 residues: Iron-sulfur cluster repair protein YtfE (221 aa).

The protein belongs to the RIC family. YtfE subfamily. In terms of assembly, homodimer.

The protein localises to the cytoplasm. In terms of biological role, di-iron-containing protein involved in the repair of iron-sulfur clusters damaged by oxidative and nitrosative stress conditions. This chain is Iron-sulfur cluster repair protein YtfE, found in Edwardsiella ictaluri (strain 93-146).